A 310-amino-acid chain; its full sequence is Methionyl-tRNA formyltransferase (310 aa).

Ser-106–Pro-109 serves as a coordination point for (6S)-5,6,7,8-tetrahydrofolate.

This sequence belongs to the Fmt family.

It carries out the reaction L-methionyl-tRNA(fMet) + (6R)-10-formyltetrahydrofolate = N-formyl-L-methionyl-tRNA(fMet) + (6S)-5,6,7,8-tetrahydrofolate + H(+). Its function is as follows. Attaches a formyl group to the free amino group of methionyl-tRNA(fMet). The formyl group appears to play a dual role in the initiator identity of N-formylmethionyl-tRNA by promoting its recognition by IF2 and preventing the misappropriation of this tRNA by the elongation apparatus. The protein is Methionyl-tRNA formyltransferase of Fervidobacterium nodosum (strain ATCC 35602 / DSM 5306 / Rt17-B1).